We begin with the raw amino-acid sequence, 431 residues long: MKGFTGASIIVFYLIKGYLSYIIFPNGYVCDFKFNPLVNVLPSINTTGDIEEVGCTINNPSLSDYIALVCPKKNYNDYEHMEKVPSKCFSSNLYSPYKSEDSAHKLEELKIPEKYSISKDFSDFDLNIILIPSLYNIDKTIYCRCDNSKTKRELIKNDGENIKLQGKLGLVKIILNNQQNSPQNIYHITRSTQVGSLDNKVIELKEGEIVHLKYDGKTRTNFNCKEIINMKISIPLDYNLSMRMPTVFLKDINCKFHLIFSNVGGIANIVFKAKKTENIDGCDFTVPKGKGLYKNGFALSEINNDEEICTVHIGRGQNSNAAGLKCPYNLTPAHCFKHVLYEKKYKNGNNVFQTFLLDDVLRTVDIEYYYNAKLSAHIVGIPTIPEKSETVRCVCEHDGKKGIMELKISSSKNIFISFILLSIIVSIFYLF.

Residues 1 to 20 form the signal peptide; that stretch reads MKGFTGASIIVFYLIKGYLS. In terms of domain architecture, 6-Cys 1 spans 26-178; that stretch reads NGYVCDFKFN…GLVKIILNNQ (153 aa). Intrachain disulfides connect C30–C55, C70–C145, and C88–C143. The N-linked (GlcNAc...) asparagine glycan is linked to N45. N-linked (GlcNAc...) asparagine glycosylation is present at N239. The 6-Cys 2 domain maps to 278-413; the sequence is NIDGCDFTVP…MELKISSSKN (136 aa). Intrachain disulfides connect C282–C309, C326–C395, and C335–C393. S409 is lipidated: GPI-anchor amidated serine. A propeptide spans 410 to 431 (removed in mature form); sequence SSKNIFISFILLSIIVSIFYLF.

The protein resides in the cell surface. The protein localises to the cell membrane. Functionally, required for female fertility. This Plasmodium berghei (strain Anka) protein is Female gametocyte surface protein P47 (PB47).